The following is a 158-amino-acid chain: Ribonuclease H (158 aa).

An RNase H type-1 domain is found at 3-144; the sequence is ELKLIHIFTD…CDQLARAAAE (142 aa). Mg(2+) is bound by residues Asp-12, Glu-50, Asp-72, and Asp-136. Positions 137–158 are disordered; sequence QLARAAAEASPTQVDEGYQPES.

This sequence belongs to the RNase H family. Monomer. Mg(2+) serves as cofactor.

Its subcellular location is the cytoplasm. The enzyme catalyses Endonucleolytic cleavage to 5'-phosphomonoester.. Endonuclease that specifically degrades the RNA of RNA-DNA hybrids. The protein is Ribonuclease H of Shewanella sp. (strain ANA-3).